We begin with the raw amino-acid sequence, 167 residues long: Telethonin (167 aa).

The residue at position 39 (serine 39) is a Phosphoserine. The interval 144–167 (VPVSKPGALRRSLSRSMSQEAQRG) is disordered. Polar residues predominate over residues 157 to 167 (SRSMSQEAQRG).

As to quaternary structure, interacts with MYOZ1, MYOZ2 and MYOZ3. Interacts with CSRP3. Interacts directly with the N-terminal Ig-like domains of 2 titin (TTN) molecules. Interacts with ANKRD2; the interaction is direct. In terms of tissue distribution, heart and skeletal muscle.

Its subcellular location is the cytoplasm. It is found in the myofibril. The protein localises to the sarcomere. Its function is as follows. Muscle assembly regulating factor. Mediates the antiparallel assembly of titin (TTN) molecules at the sarcomeric Z-disk. The chain is Telethonin (TCAP) from Homo sapiens (Human).